The sequence spans 525 residues: MLGKRKRVVLTIKDKLDIIKKLEEGNSFKKLSVLYGIGESTVRDIKKNKERIINYANSSDPTSGVSKRKSMKSSTYEELDRVMIEWFNQQKTDGIPVSGTICAKQARFFFDALGMEGDFNASSGWLTRFKQRHGIPKAAGKGTKLKGDETAASEFCGNFQEFVERENLLPEQIYGADQTGLFWKCLPTRTLAFDTDQSTCEYRTSRERIIIMCCANATGSHKLNLCVVGKAKRPRAFKGTDLSNLPVTYFSQKSAWIEPSVLKQWFEKCFVPQVQKHLKSKGLREKAVLLLDFPAAHPAEELLSSDDGRIIVKYLPPNVTSLIQPMSQGVLTTVKRYYRAGLIQKYMDEGNDPKTFWKNLTVLDAIYEASRAWNQIRSNTITRAWKKLFPGNEENPSVSIDEGAILAANLATVLQNTEDCEHVNIENIEQWFDSRSSGSNCQVLADIVGAADRAKVTEQKPSRKTRKAELNPEKHISHKAALEWTENLLDYLEQQDDMLLSDKLVLRRLRTIIRRKQRIQNKSHL.

In terms of domain architecture, HTH psq-type spans 1–52; that stretch reads MLGKRKRVVLTIKDKLDIIKKLEEGNSFKKLSVLYGIGESTVRDIKKNKERI. DNA-binding regions (H-T-H motif) lie at residues 28-48 and 100-132; these read FKKL…IKKN and TICA…FKQR. Positions 67 to 139 constitute an HTH CENPB-type domain; it reads KRKSMKSSTY…KQRHGIPKAA (73 aa). Positions 168 to 385 constitute a DDE-1 domain; it reads LLPEQIYGAD…IRSNTITRAW (218 aa).

It belongs to the tigger transposable element derived protein family.

The protein localises to the nucleus. The polypeptide is Tigger transposable element-derived protein 2 (Tigd2) (Mus musculus (Mouse)).